Reading from the N-terminus, the 258-residue chain is Lipoprotein-releasing system ATP-binding protein LolD (258 aa).

The region spanning leucine 5–asparagine 244 is the ABC transporter domain. Glycine 41–serine 48 contributes to the ATP binding site. The segment at leucine 222–valine 258 is disordered. Positions serine 226–alanine 243 are enriched in polar residues. A compositionally biased stretch (basic and acidic residues) spans lysine 247–valine 258.

The protein belongs to the ABC transporter superfamily. Lipoprotein translocase (TC 3.A.1.125) family. As to quaternary structure, the complex is composed of two ATP-binding proteins (LolD) and two transmembrane proteins (LolC and LolE).

The protein localises to the cell inner membrane. Part of the ABC transporter complex LolCDE involved in the translocation of mature outer membrane-directed lipoproteins, from the inner membrane to the periplasmic chaperone, LolA. Responsible for the formation of the LolA-lipoprotein complex in an ATP-dependent manner. This is Lipoprotein-releasing system ATP-binding protein LolD from Colwellia psychrerythraea (strain 34H / ATCC BAA-681) (Vibrio psychroerythus).